A 510-amino-acid polypeptide reads, in one-letter code: D-alanine--D-alanyl carrier protein ligase (510 aa).

157 to 158 (TS) contacts ATP. Residue Asp-202 participates in D-alanine binding. An ATP-binding site is contributed by 297–302 (NTYGPT). A D-alanine-binding site is contributed by Val-306. ATP contacts are provided by Asp-389 and Lys-498. Lys-498 contributes to the D-alanine binding site.

The protein belongs to the ATP-dependent AMP-binding enzyme family. DltA subfamily.

It localises to the cytoplasm. The catalysed reaction is holo-[D-alanyl-carrier protein] + D-alanine + ATP = D-alanyl-[D-alanyl-carrier protein] + AMP + diphosphate. The protein operates within cell wall biogenesis; lipoteichoic acid biosynthesis. Its function is as follows. Catalyzes the first step in the D-alanylation of lipoteichoic acid (LTA), the activation of D-alanine and its transfer onto the D-alanyl carrier protein (Dcp) DltC. In an ATP-dependent two-step reaction, forms a high energy D-alanyl-AMP intermediate, followed by transfer of the D-alanyl residue as a thiol ester to the phosphopantheinyl prosthetic group of the Dcp. D-alanylation of LTA plays an important role in modulating the properties of the cell wall in Gram-positive bacteria, influencing the net charge of the cell wall. The polypeptide is D-alanine--D-alanyl carrier protein ligase (Listeria monocytogenes serotype 4b (strain F2365)).